The following is a 605-amino-acid chain: uncharacterized protein (605 aa).

A disordered region spans residues 22–93 (FTEPARFYPS…KQGTAVHGAE (72 aa)). Over residues 46-57 (SENASSSVPSHS) the composition is skewed to low complexity.

This is an uncharacterized protein from Treponema pallidum (strain Nichols).